Reading from the N-terminus, the 283-residue chain is Diaminopimelate epimerase (283 aa).

Substrate-binding residues include Asn-13, Gln-45, and Asn-65. The Proton donor role is filled by Cys-74. Substrate contacts are provided by residues 75 to 76 (GN), Asn-156, Asn-190, and 208 to 209 (ER). The active-site Proton acceptor is Cys-217. 218–219 (GS) is a binding site for substrate.

Belongs to the diaminopimelate epimerase family. In terms of assembly, homodimer.

The protein localises to the cytoplasm. It catalyses the reaction (2S,6S)-2,6-diaminopimelate = meso-2,6-diaminopimelate. The protein operates within amino-acid biosynthesis; L-lysine biosynthesis via DAP pathway; DL-2,6-diaminopimelate from LL-2,6-diaminopimelate: step 1/1. Catalyzes the stereoinversion of LL-2,6-diaminopimelate (L,L-DAP) to meso-diaminopimelate (meso-DAP), a precursor of L-lysine and an essential component of the bacterial peptidoglycan. The polypeptide is Diaminopimelate epimerase (Bartonella tribocorum (strain CIP 105476 / IBS 506)).